The chain runs to 500 residues: tRNA nucleotidyltransferase cca1 (500 aa).

Residues 122 to 139 (DYTNSNSSNKLVFGTPLE) form a flexible loop region. An ERhxxExxxhh motif motif is present at residues 231–241 (ERIGVEVDKML).

This sequence belongs to the tRNA nucleotidyltransferase/poly(A) polymerase family.

It catalyses the reaction a tRNA precursor + 2 CTP = a tRNA with a 3' CC end + 2 diphosphate. Functionally, tRNA nucleotidyltransferase involved in the synthesis of the tRNA CCA terminus. In contrast to what is usually observed in eukaryotes for which one enzyme synthesizes the whole tRNA CCA terminus, in S.pombe, cca1 specifically adds two cytidine residues to a tRNA substrate lacking this sequence while cca2 specifically adds the terminal adenosine residue thereby completing the CCA sequence. The chain is tRNA nucleotidyltransferase cca1 from Schizosaccharomyces pombe (strain 972 / ATCC 24843) (Fission yeast).